A 310-amino-acid polypeptide reads, in one-letter code: ADP-L-glycero-D-manno-heptose-6-epimerase (310 aa).

NADP(+)-binding positions include 10 to 11 (FI), 31 to 32 (DN), lysine 38, lysine 53, 75 to 79 (EGACS), and asparagine 92. Tyrosine 140 serves as the catalytic Proton acceptor. Lysine 144 contributes to the NADP(+) binding site. Asparagine 169 is a binding site for substrate. NADP(+) is bound by residues valine 170 and lysine 178. The Proton acceptor role is filled by lysine 178. Substrate is bound by residues serine 180, histidine 187, 201 to 204 (FEGS), and arginine 209. Lysine 267 is subject to N6-acetyllysine. Tyrosine 272 contacts substrate.

Belongs to the NAD(P)-dependent epimerase/dehydratase family. HldD subfamily. As to quaternary structure, homopentamer. It depends on NADP(+) as a cofactor.

The enzyme catalyses ADP-D-glycero-beta-D-manno-heptose = ADP-L-glycero-beta-D-manno-heptose. It functions in the pathway nucleotide-sugar biosynthesis; ADP-L-glycero-beta-D-manno-heptose biosynthesis; ADP-L-glycero-beta-D-manno-heptose from D-glycero-beta-D-manno-heptose 7-phosphate: step 4/4. Its function is as follows. Catalyzes the interconversion between ADP-D-glycero-beta-D-manno-heptose and ADP-L-glycero-beta-D-manno-heptose via an epimerization at carbon 6 of the heptose. The polypeptide is ADP-L-glycero-D-manno-heptose-6-epimerase (Escherichia coli (strain SMS-3-5 / SECEC)).